The primary structure comprises 494 residues: Alpha-amylase A (494 aa).

A signal peptide spans 1 to 18; sequence MFLAKSLVCLALLAVANA. Glutamine 19 is modified (pyrrolidone carboxylic acid). The cysteines at positions 46 and 102 are disulfide-linked. Asparagine 116, arginine 165, and aspartate 174 together coordinate Ca(2+). Cysteine 153 and cysteine 167 are joined by a disulfide. Arginine 202 lines the chloride pocket. Residue aspartate 204 is the Nucleophile of the active site. Residue histidine 208 participates in Ca(2+) binding. The active-site Proton donor is glutamate 241. Asparagine 304 and arginine 343 together coordinate chloride. 2 cysteine pairs are disulfide-bonded: cysteine 376/cysteine 382 and cysteine 448/cysteine 460.

The protein belongs to the glycosyl hydrolase 13 family. As to quaternary structure, monomer. It depends on Ca(2+) as a cofactor. Chloride serves as cofactor.

It catalyses the reaction Endohydrolysis of (1-&gt;4)-alpha-D-glucosidic linkages in polysaccharides containing three or more (1-&gt;4)-alpha-linked D-glucose units.. The sequence is that of Alpha-amylase A (Amy-d) from Drosophila mauritiana (Fruit fly).